A 550-amino-acid chain; its full sequence is Proteasome-associated ATPase (550 aa).

Residues 9–48 adopt a coiled-coil conformation; sequence EELARRVASLSAQNERLAQILVEARSKIVGLQQQIDDLAQ. 233–238 lines the ATP pocket; the sequence is GCGKTL. Residues 528 to 550 are disordered; that stretch reads KGEGKNPTPAKAIETPHNTGPYL. The segment at 549–550 is docks into pockets in the proteasome alpha-ring; sequence YL.

This sequence belongs to the AAA ATPase family. As to quaternary structure, homohexamer. Assembles into a hexameric ring structure that caps the 20S proteasome core. Strongly interacts with the prokaryotic ubiquitin-like protein Pup through a hydrophobic interface; the interacting region of ARC lies in its N-terminal coiled-coil domain. There is one Pup binding site per ARC hexamer ring. Upon ATP-binding, the C-terminus of ARC interacts with the alpha-rings of the proteasome core, possibly by binding to the intersubunit pockets.

Its pathway is protein degradation; proteasomal Pup-dependent pathway. Its function is as follows. ATPase which is responsible for recognizing, binding, unfolding and translocation of pupylated proteins into the bacterial 20S proteasome core particle. May be essential for opening the gate of the 20S proteasome via an interaction with its C-terminus, thereby allowing substrate entry and access to the site of proteolysis. Thus, the C-termini of the proteasomal ATPase may function like a 'key in a lock' to induce gate opening and therefore regulate proteolysis. The sequence is that of Proteasome-associated ATPase from Jonesia denitrificans (strain ATCC 14870 / DSM 20603 / BCRC 15368 / CIP 55.134 / JCM 11481 / NBRC 15587 / NCTC 10816 / Prevot 55134) (Listeria denitrificans).